Reading from the N-terminus, the 445-residue chain is 3-phosphoshikimate 1-carboxyvinyltransferase (445 aa).

3-phosphoshikimate is bound by residues K25, S26, and R30. K25 is a phosphoenolpyruvate binding site. Positions 98 and 126 each coordinate phosphoenolpyruvate. Residues S171, Q173, D324, and K351 each contribute to the 3-phosphoshikimate site. Q173 contributes to the phosphoenolpyruvate binding site. D324 functions as the Proton acceptor in the catalytic mechanism. Residues R355 and R398 each coordinate phosphoenolpyruvate.

It belongs to the EPSP synthase family. Monomer.

The protein resides in the cytoplasm. It carries out the reaction 3-phosphoshikimate + phosphoenolpyruvate = 5-O-(1-carboxyvinyl)-3-phosphoshikimate + phosphate. It participates in metabolic intermediate biosynthesis; chorismate biosynthesis; chorismate from D-erythrose 4-phosphate and phosphoenolpyruvate: step 6/7. In terms of biological role, catalyzes the transfer of the enolpyruvyl moiety of phosphoenolpyruvate (PEP) to the 5-hydroxyl of shikimate-3-phosphate (S3P) to produce enolpyruvyl shikimate-3-phosphate and inorganic phosphate. The chain is 3-phosphoshikimate 1-carboxyvinyltransferase from Hydrogenovibrio crunogenus (strain DSM 25203 / XCL-2) (Thiomicrospira crunogena).